Here is a 964-residue protein sequence, read N- to C-terminus: Translation initiation factor IF-2 (964 aa).

The segment at 26 to 375 (AAGVSKRSPE…QNNQHAFQAP (350 aa)) is disordered. Basic and acidic residues-rich tracts occupy residues 49 to 60 (YLKRSHGAREDS), 91 to 103 (VRPDDAPRAEAPK), 118 to 154 (AKPEPKPEPKVEAKPEPKPEPKPEPKVEAKPEPKPEP), 174 to 206 (IAAREAEEKRQAAFRARQEALMREKIEREERRQ), 225 to 236 (PQREERRDDRRG), 243 to 252 (RGPRGNDNRG), and 328 to 339 (KGGERSWDDNKK). The region spanning 464–633 (PRSPVVTVMG…LLQAEVLELK (170 aa)) is the tr-type G domain. The segment at 473–480 (GHVDHGKT) is G1. A GTP-binding site is contributed by 473 to 480 (GHVDHGKT). The segment at 498 to 502 (GITQH) is G2. The G3 stretch occupies residues 519–522 (DTPG). GTP-binding positions include 519-523 (DTPGH) and 573-576 (NKID). The tract at residues 573–576 (NKID) is G4. The tract at residues 609–611 (SAK) is G5.

The protein belongs to the TRAFAC class translation factor GTPase superfamily. Classic translation factor GTPase family. IF-2 subfamily.

The protein resides in the cytoplasm. Its function is as follows. One of the essential components for the initiation of protein synthesis. Protects formylmethionyl-tRNA from spontaneous hydrolysis and promotes its binding to the 30S ribosomal subunits. Also involved in the hydrolysis of GTP during the formation of the 70S ribosomal complex. This is Translation initiation factor IF-2 from Chromobacterium violaceum (strain ATCC 12472 / DSM 30191 / JCM 1249 / CCUG 213 / NBRC 12614 / NCIMB 9131 / NCTC 9757 / MK).